Reading from the N-terminus, the 451-residue chain is NADH-quinone oxidoreductase subunit D (451 aa).

Belongs to the complex I 49 kDa subunit family. NDH-1 is composed of 14 different subunits. Subunits NuoB, C, D, E, F, and G constitute the peripheral sector of the complex.

It is found in the cell inner membrane. It carries out the reaction a quinone + NADH + 5 H(+)(in) = a quinol + NAD(+) + 4 H(+)(out). NDH-1 shuttles electrons from NADH, via FMN and iron-sulfur (Fe-S) centers, to quinones in the respiratory chain. The immediate electron acceptor for the enzyme in this species is believed to be a menaquinone. Couples the redox reaction to proton translocation (for every two electrons transferred, four hydrogen ions are translocated across the cytoplasmic membrane), and thus conserves the redox energy in a proton gradient. The sequence is that of NADH-quinone oxidoreductase subunit D from Salinibacter ruber (strain DSM 13855 / M31).